We begin with the raw amino-acid sequence, 211 residues long: LexA repressor (211 aa).

The segment at residues 30–50 (RVEIAREIGFKSPNAAEEHLK) is a DNA-binding region (H-T-H motif). Catalysis depends on for autocatalytic cleavage activity residues Ser128 and Lys165.

It belongs to the peptidase S24 family. Homodimer.

The catalysed reaction is Hydrolysis of Ala-|-Gly bond in repressor LexA.. Functionally, represses a number of genes involved in the response to DNA damage (SOS response), including recA and lexA. In the presence of single-stranded DNA, RecA interacts with LexA causing an autocatalytic cleavage which disrupts the DNA-binding part of LexA, leading to derepression of the SOS regulon and eventually DNA repair. In Haemophilus ducreyi (strain 35000HP / ATCC 700724), this protein is LexA repressor.